Consider the following 470-residue polypeptide: Sorting nexin-17 (470 aa).

In terms of domain architecture, PX spans 1 to 109; sequence MHFSIPETES…SFLRRAQQET (109 aa). Residues R36, S38, K62, and R75 each contribute to the a 1,2-diacyl-sn-glycero-3-phospho-(1D-myo-inositol-3-phosphate) site. Positions 115-206 constitute a Ras-associating domain; sequence EEVSLEVLLS…YKIVLRKSYW (92 aa). The segment at 115 to 432 is FERM-like; that stretch reads EEVSLEVLLS…DATRESMVKL (318 aa). The tract at residues 270 to 432 is PTB-like F3 module; that stretch reads GYLRFDACVA…DATRESMVKL (163 aa). Residues S336, S407, S409, S415, S421, S437, and S440 each carry the phosphoserine modification. Residues 401–426 are disordered; it reads GGTLRRSDSQQAVKSPPLLESPDATR. Positions 458 to 470 are interacts with the retriever complex; that stretch reads GNFAFEGIGDEDL.

The protein belongs to the sorting nexin family. In terms of assembly, monomer. Interacts with APP (via cytoplasmic YXNPXY motif). Interacts with KIF1B. Interacts with the C-termini of P-selectin, PTC, LDLR, VLDLR, LRP1 and LRP8. Interacts with KRIT1 (via N-terminus). Interacts with HRAS. Interacts with ITGB1 and ITGB5 (via NPxY motif). Interacts with CCDC22 and CCDC93; the interaction associates SNX17 with the CCC complex. Interacts (via C-terminus) with VPS26C and VPS35L; the interactions are direct and associate SNX17 with the retriever complex.

It is found in the cytoplasm. The protein resides in the early endosome. It localises to the cytoplasmic vesicle membrane. In terms of biological role, critical regulator of endosomal recycling of numerous surface proteins, including integrins, signaling receptor and channels. Binds to NPxY sequences in the cytoplasmic tails of target cargos. Associates with retriever and CCC complexes to prevent lysosomal degradation and promote cell surface recycling of numerous cargos such as integrins ITGB1, ITGB5 and their associated alpha subunits. Also required for maintenance of normal cell surface levels of APP and LRP1. Interacts with membranes containing phosphatidylinositol 3-phosphate (PtdIns(3P)). This chain is Sorting nexin-17 (SNX17), found in Homo sapiens (Human).